The sequence spans 389 residues: Succinate--CoA ligase [ADP-forming] subunit beta (389 aa).

Residues 9–236 (RDMFEAHGVP…KDAADPLEAK (228 aa)) form the ATP-grasp domain. Residues lysine 45, 52 to 54 (GRG), alanine 94, and glutamate 99 each bind ATP. The Mg(2+) site is built by asparagine 191 and aspartate 205. Substrate contacts are provided by residues asparagine 256 and 318-320 (GIT).

It belongs to the succinate/malate CoA ligase beta subunit family. As to quaternary structure, heterotetramer of two alpha and two beta subunits. The cofactor is Mg(2+).

It catalyses the reaction succinate + ATP + CoA = succinyl-CoA + ADP + phosphate. The enzyme catalyses GTP + succinate + CoA = succinyl-CoA + GDP + phosphate. Its pathway is carbohydrate metabolism; tricarboxylic acid cycle; succinate from succinyl-CoA (ligase route): step 1/1. Its function is as follows. Succinyl-CoA synthetase functions in the citric acid cycle (TCA), coupling the hydrolysis of succinyl-CoA to the synthesis of either ATP or GTP and thus represents the only step of substrate-level phosphorylation in the TCA. The beta subunit provides nucleotide specificity of the enzyme and binds the substrate succinate, while the binding sites for coenzyme A and phosphate are found in the alpha subunit. This chain is Succinate--CoA ligase [ADP-forming] subunit beta, found in Pseudarthrobacter chlorophenolicus (strain ATCC 700700 / DSM 12829 / CIP 107037 / JCM 12360 / KCTC 9906 / NCIMB 13794 / A6) (Arthrobacter chlorophenolicus).